The following is a 95-amino-acid chain: Large ribosomal subunit protein uL23 (95 aa).

Belongs to the universal ribosomal protein uL23 family. As to quaternary structure, part of the 50S ribosomal subunit. Contacts protein L29, and trigger factor when it is bound to the ribosome.

Its function is as follows. One of the early assembly proteins it binds 23S rRNA. One of the proteins that surrounds the polypeptide exit tunnel on the outside of the ribosome. Forms the main docking site for trigger factor binding to the ribosome. The polypeptide is Large ribosomal subunit protein uL23 (Geobacillus thermodenitrificans (strain NG80-2)).